The primary structure comprises 92 residues: MGLLKKKDSTSARSSTSPCADLRNAYHNCFNKWYSEKFVKGQWDKEECVAEWKKYRDCLSENLDGKLLTRILEVDGELNPTKQATDSKESSS.

Positions methionine 1–threonine 10 are enriched in basic and acidic residues. Residues methionine 1–aspartate 21 form a disordered region. The region spanning threonine 16–lysine 66 is the CHCH domain. 2 consecutive short sequence motifs (cx9C motif) follow at residues cysteine 19–cysteine 29 and cysteine 48–cysteine 58. Disulfide bonds link cysteine 19-cysteine 58 and cysteine 29-cysteine 48.

This sequence belongs to the TRIAP1/MDM35 family.

This is an uncharacterized protein from Arabidopsis thaliana (Mouse-ear cress).